The sequence spans 502 residues: Probable cytosol aminopeptidase (502 aa).

The Mn(2+) site is built by Lys-269 and Asp-274. Residue Lys-281 is part of the active site. Mn(2+) is bound by residues Asp-292, Asp-351, and Glu-353. Arg-355 is an active-site residue.

This sequence belongs to the peptidase M17 family. The cofactor is Mn(2+).

The protein resides in the cytoplasm. It catalyses the reaction Release of an N-terminal amino acid, Xaa-|-Yaa-, in which Xaa is preferably Leu, but may be other amino acids including Pro although not Arg or Lys, and Yaa may be Pro. Amino acid amides and methyl esters are also readily hydrolyzed, but rates on arylamides are exceedingly low.. The catalysed reaction is Release of an N-terminal amino acid, preferentially leucine, but not glutamic or aspartic acids.. Its function is as follows. Presumably involved in the processing and regular turnover of intracellular proteins. Catalyzes the removal of unsubstituted N-terminal amino acids from various peptides. The polypeptide is Probable cytosol aminopeptidase (Aliivibrio fischeri (strain MJ11) (Vibrio fischeri)).